A 217-amino-acid chain; its full sequence is tRNA (guanine-N(7)-)-methyltransferase (217 aa).

S-adenosyl-L-methionine is bound by residues Glu43, Asp68, Asn101, and Asn123. Lys127 serves as a coordination point for substrate. The segment at 129–134 is interaction with RNA; sequence RHNKRR. Residues Asp159 and 196-199 each bind substrate; that span reads TEYE.

It belongs to the class I-like SAM-binding methyltransferase superfamily. TrmB family.

It catalyses the reaction guanosine(46) in tRNA + S-adenosyl-L-methionine = N(7)-methylguanosine(46) in tRNA + S-adenosyl-L-homocysteine. It participates in tRNA modification; N(7)-methylguanine-tRNA biosynthesis. In terms of biological role, catalyzes the formation of N(7)-methylguanine at position 46 (m7G46) in tRNA. This Clostridium botulinum (strain Loch Maree / Type A3) protein is tRNA (guanine-N(7)-)-methyltransferase.